Consider the following 496-residue polypeptide: Glycylpeptide N-tetradecanoyltransferase 1 (496 aa).

Residues 1 to 81 form a disordered region; sequence MADESETAVK…DSTQDQPVKM (81 aa). Ser-31 and Ser-47 each carry phosphoserine. Over residues 55–66 the composition is skewed to basic residues; sequence KKKKKKQKKKKE. Ser-83 carries the post-translational modification Phosphoserine. Residues Gln-118, Phe-119, Trp-120, Phe-247, Leu-248, Cys-249, Val-250, Ser-256, Arg-258, Val-259, and Ala-260 each coordinate tetradecanoyl-CoA.

The protein belongs to the NMT family.

It localises to the cytoplasm. The protein localises to the cytosol. The protein resides in the membrane. The enzyme catalyses N-terminal glycyl-[protein] + tetradecanoyl-CoA = N-tetradecanoylglycyl-[protein] + CoA + H(+). It carries out the reaction N-terminal glycyl-L-lysyl-[protein] + tetradecanoyl-CoA = N-terminal glycyl-(N(6)-tetradecanoyl)-L-lysyl-[protein] + CoA + H(+). Its function is as follows. Adds a myristoyl group to the N-terminal glycine residue of certain cellular and viral proteins. Also able to mediate N-terminal lysine myristoylation of proteins: catalyzes myristoylation of ARF6 on both 'Gly-2' and 'Lys-3'. Lysine myristoylation is required to maintain ARF6 on membranes during the GTPase cycle. The protein is Glycylpeptide N-tetradecanoyltransferase 1 (Nmt1) of Rattus norvegicus (Rat).